The sequence spans 303 residues: Diaminopimelate epimerase (303 aa).

Residues Asn-15 and Asn-72 each contribute to the substrate site. The active-site Proton donor is Cys-81. Substrate-binding positions include 82-83 (GN), Asn-169, Asn-202, and 220-221 (ER). Cys-229 (proton acceptor) is an active-site residue. 230-231 (GT) is a substrate binding site.

Belongs to the diaminopimelate epimerase family. In terms of assembly, homodimer.

The protein resides in the cytoplasm. It carries out the reaction (2S,6S)-2,6-diaminopimelate = meso-2,6-diaminopimelate. Its pathway is amino-acid biosynthesis; L-lysine biosynthesis via DAP pathway; DL-2,6-diaminopimelate from LL-2,6-diaminopimelate: step 1/1. In terms of biological role, catalyzes the stereoinversion of LL-2,6-diaminopimelate (L,L-DAP) to meso-diaminopimelate (meso-DAP), a precursor of L-lysine and an essential component of the bacterial peptidoglycan. The polypeptide is Diaminopimelate epimerase (Prochlorococcus marinus (strain MIT 9313)).